The chain runs to 181 residues: MTPEFANDLKASVRAIPDYPKPGIIFRDITTLLGEPRAFRRAIDELVQPWAGSKIDKVAGIEARGFIIGGAIAHQVSSGFVPIRKKGKLPHTCVSMEYALEYGTDKIEVHVDAITPGERVILVDDLIATGGTAEGAIKLLRQIGAEVVAACFVIDLPELGGAAKIRAMGVPVRTLVAFEGH.

Belongs to the purine/pyrimidine phosphoribosyltransferase family. In terms of assembly, homodimer.

The protein localises to the cytoplasm. The enzyme catalyses AMP + diphosphate = 5-phospho-alpha-D-ribose 1-diphosphate + adenine. The protein operates within purine metabolism; AMP biosynthesis via salvage pathway; AMP from adenine: step 1/1. Catalyzes a salvage reaction resulting in the formation of AMP, that is energically less costly than de novo synthesis. This is Adenine phosphoribosyltransferase from Rhodopseudomonas palustris (strain ATCC BAA-98 / CGA009).